A 282-amino-acid polypeptide reads, in one-letter code: uncharacterized protein (282 aa).

Residues 1 to 77 (MNGLLRIRQR…LALSEALASQ (77 aa)) form the HTH rpiR-type domain. The segment at residues 37 to 56 (SQQLANEAGVSQSSVVKFAQ) is a DNA-binding region (H-T-H motif). The 141-residue stretch at 125–265 (CVTMLRSARR…FIALIQQDLE (141 aa)) folds into the SIS domain.

This is an uncharacterized protein from Escherichia coli (strain K12).